The sequence spans 462 residues: Chromosomal replication initiator protein DnaA (462 aa).

The domain I, interacts with DnaA modulators stretch occupies residues Met1 to Ala84. Residues Ala84–Ser125 form a domain II region. Positions Asn126–Ala342 are domain III, AAA+ region. Positions 170, 172, 173, and 174 each coordinate ATP. A domain IV, binds dsDNA region spans residues Asn343–Ser462.

Belongs to the DnaA family. In terms of assembly, oligomerizes as a right-handed, spiral filament on DNA at oriC.

It localises to the cytoplasm. Plays an essential role in the initiation and regulation of chromosomal replication. ATP-DnaA binds to the origin of replication (oriC) to initiate formation of the DNA replication initiation complex once per cell cycle. Binds the DnaA box (a 9 base pair repeat at the origin) and separates the double-stranded (ds)DNA. Forms a right-handed helical filament on oriC DNA; dsDNA binds to the exterior of the filament while single-stranded (ss)DNA is stabiized in the filament's interior. The ATP-DnaA-oriC complex binds and stabilizes one strand of the AT-rich DNA unwinding element (DUE), permitting loading of DNA polymerase. After initiation quickly degrades to an ADP-DnaA complex that is not apt for DNA replication. Binds acidic phospholipids. The sequence is that of Chromosomal replication initiator protein DnaA from Shewanella baltica (strain OS195).